Here is an 898-residue protein sequence, read N- to C-terminus: Putative disease resistance protein At1g63350 (898 aa).

Positions Val24 to Asn88 form a coiled coil. Positions Asp137–Gly440 constitute an NB-ARC domain. Residue Gly179 to Thr186 participates in ATP binding. 6 LRR repeats span residues Val516 to Met537, Glu538 to Ser559, Lys562 to Leu584, Ser586 to Lys608, Lys609 to His631, and Asn632 to Glu654.

It belongs to the disease resistance NB-LRR family.

In terms of biological role, potential disease resistance protein. The sequence is that of Putative disease resistance protein At1g63350 from Arabidopsis thaliana (Mouse-ear cress).